The chain runs to 779 residues: Acyl-homoserine lactone acylase PvdQ (779 aa).

The N-terminal stretch at 1–25 is a signal peptide; it reads MIISRPLCSFVFAGLSFAVILPAQA. Positions 202–223 are cleaved as a propeptide — spacer peptide; that stretch reads AQQAQALQLAAARNQRFALERG. Residue Ser-224 is the Nucleophile of the active site. Polar residues predominate over residues 731-746; sequence ESSNPQSAHSSDQTEA. The tract at residues 731–750 is disordered; it reads ESSNPQSAHSSDQTEAFSKK.

Belongs to the peptidase S45 family. In terms of assembly, heterodimer of an alpha subunit and a beta subunit processed from the same precursor.

Its subcellular location is the periplasm. It catalyses the reaction an N-acyl-L-homoserine lactone + H2O = L-homoserine lactone + a carboxylate. Functionally, catalyzes the deacylation of acyl-homoserine lactone (AHL or acyl-HSL), releasing homoserine lactone (HSL) and the corresponding fatty acid. Possesses a specificity for the degradation of long-chain acyl-HSLs (side chains of 11 to 14 carbons in length). The polypeptide is Acyl-homoserine lactone acylase PvdQ (pvdQ) (Pseudomonas syringae pv. syringae (strain B728a)).